The primary structure comprises 89 residues: Large ribosomal subunit protein bL27 (89 aa).

This sequence belongs to the bacterial ribosomal protein bL27 family.

In Cytophaga hutchinsonii (strain ATCC 33406 / DSM 1761 / CIP 103989 / NBRC 15051 / NCIMB 9469 / D465), this protein is Large ribosomal subunit protein bL27.